A 379-amino-acid chain; its full sequence is F-box protein At5g18160 (379 aa).

A disordered region spans residues 1–26 (MDKQDEKKQGTTKSSSTLTTRCSHGN). Positions 11-26 (TTKSSSTLTTRCSHGN) are enriched in polar residues. Positions 28–74 (ISQSNSIPLDITIEILSRLPAKSIVRSRSVSKLWSSITTTPEFIKHR) constitute an F-box domain.

The protein is F-box protein At5g18160 of Arabidopsis thaliana (Mouse-ear cress).